The following is a 405-amino-acid chain: Acetate kinase (405 aa).

Asn-7 lines the Mg(2+) pocket. Lys-14 lines the ATP pocket. Substrate is bound at residue Arg-98. Residue Asp-155 is the Proton donor/acceptor of the active site. ATP contacts are provided by residues 215-219, 289-291, and 337-341; these read HLGNG, DMR, and GIGEN. Glu-391 is a Mg(2+) binding site.

It belongs to the acetokinase family. Homodimer. It depends on Mg(2+) as a cofactor. The cofactor is Mn(2+).

It localises to the cytoplasm. It carries out the reaction acetate + ATP = acetyl phosphate + ADP. It participates in metabolic intermediate biosynthesis; acetyl-CoA biosynthesis; acetyl-CoA from acetate: step 1/2. Functionally, catalyzes the formation of acetyl phosphate from acetate and ATP. Can also catalyze the reverse reaction. The sequence is that of Acetate kinase from Desulfotalea psychrophila (strain LSv54 / DSM 12343).